A 187-amino-acid polypeptide reads, in one-letter code: Guanylate kinase (187 aa).

S2 is modified (N-acetylserine). The Guanylate kinase-like domain occupies 2–184; it reads SRPIVISGPS…AYKELKDFIF (183 aa). 9 to 16 contacts ATP; the sequence is GPSGTGKS. GMP-binding positions include S35, 39–42, Y51, E70, 79–81, and D101; these read RTPR and YGS. A Phosphoserine modification is found at S149. Y157 carries the post-translational modification Phosphotyrosine.

It belongs to the guanylate kinase family. Monomer.

It catalyses the reaction GMP + ATP = GDP + ADP. Its function is as follows. Catalyzes the reversible transfer of the terminal phosphoryl group of ATP to the acceptor molecule GMP. Essential for recycling GMP and indirectly, cGMP. The polypeptide is Guanylate kinase (GUK1) (Saccharomyces cerevisiae (strain ATCC 204508 / S288c) (Baker's yeast)).